We begin with the raw amino-acid sequence, 198 residues long: Patulin synthesis protein F (198 aa).

Positions 1 to 18 (MRLSTVLLGSLLGALTQA) are cleaved as a signal peptide. N-linked (GlcNAc...) asparagine glycosylation is found at asparagine 128 and asparagine 184.

Belongs to the patF family.

It is found in the cytoplasm. The protein localises to the cytosol. The enzyme catalyses phyllostine = neopatulin. Its pathway is mycotoxin biosynthesis; patulin biosynthesis. Its function is as follows. Part of the gene cluster that mediates the biosynthesis of patulin, an acetate-derived tetraketide mycotoxin produced by several fungal species that shows antimicrobial properties against several bacteria. PatF catalyzes the conversion of phyllostine into neopatulin. The pathway begins with the synthesis of 6-methylsalicylic acid by the polyketide synthase (PKS) patK via condensation of acetate and malonate units. The 6-methylsalicylic acid decarboxylase patG then catalyzes the decarboxylation of 6-methylsalicylic acid to yield m-cresol (also known as 3-methylphenol). These first reactions occur in the cytosol. The intermediate m-cresol is then transported into the endoplasmic reticulum where the cytochrome P450 monooxygenase patH converts it to m-hydroxybenzyl alcohol, which is further converted to gentisyl alcohol by the cytochrome P450 monooxygenase patI. The oxidoreductases patJ and patO further convert gentisyl alcohol to isoepoxydon in the vacuole. PatN catalyzes then the transformation of isoepoxydon into phyllostine. The cluster protein patF is responsible for the conversion from phyllostine to neopatulin whereas the alcohol dehydrogenase patD converts neopatulin to E-ascladiol. The steps between isoepoxydon and E-ascladiol occur in the cytosol, and E-ascladiol is probably secreted to the extracellular space by one of the cluster-specific transporters patC or patM. Finally, the secreted patulin synthase patE catalyzes the conversion of E-ascladiol to patulin. The chain is Patulin synthesis protein F from Aspergillus clavatus (strain ATCC 1007 / CBS 513.65 / DSM 816 / NCTC 3887 / NRRL 1 / QM 1276 / 107).